The following is a 203-amino-acid chain: Large ribosomal subunit protein bL25 (203 aa).

The protein belongs to the bacterial ribosomal protein bL25 family. CTC subfamily. As to quaternary structure, part of the 50S ribosomal subunit; part of the 5S rRNA/L5/L18/L25 subcomplex. Contacts the 5S rRNA. Binds to the 5S rRNA independently of L5 and L18.

This is one of the proteins that binds to the 5S RNA in the ribosome where it forms part of the central protuberance. In Rickettsia africae (strain ESF-5), this protein is Large ribosomal subunit protein bL25.